The chain runs to 364 residues: Spermidine/putrescine import ATP-binding protein PotA (364 aa).

The 231-residue stretch at 5–235 (LSFKDVSKGF…PVNRFVADFI (231 aa)) folds into the ABC transporter domain. 37–44 (GPSGCGKT) is a binding site for ATP.

This sequence belongs to the ABC transporter superfamily. Spermidine/putrescine importer (TC 3.A.1.11.1) family. In terms of assembly, the complex is composed of two ATP-binding proteins (PotA), two transmembrane proteins (PotB and PotC) and a solute-binding protein (PotD).

Its subcellular location is the cell membrane. The enzyme catalyses ATP + H2O + polyamine-[polyamine-binding protein]Side 1 = ADP + phosphate + polyamineSide 2 + [polyamine-binding protein]Side 1.. Functionally, part of the ABC transporter complex PotABCD involved in spermidine/putrescine import. Responsible for energy coupling to the transport system. This chain is Spermidine/putrescine import ATP-binding protein PotA, found in Staphylococcus epidermidis (strain ATCC 12228 / FDA PCI 1200).